The primary structure comprises 415 residues: uncharacterized protein (415 aa).

The [4Fe-4S] cluster site is built by cysteine 85, cysteine 91, cysteine 94, and cysteine 175. S-adenosyl-L-methionine-binding residues include glutamine 248, tyrosine 276, glutamate 297, and asparagine 344. The active-site Nucleophile is the cysteine 371.

Belongs to the class I-like SAM-binding methyltransferase superfamily. RNA M5U methyltransferase family.

This is an uncharacterized protein from Leptospira interrogans serogroup Icterohaemorrhagiae serovar Lai (strain 56601).